Reading from the N-terminus, the 300-residue chain is Ribosomal protein L11 methyltransferase (300 aa).

The S-adenosyl-L-methionine site is built by T152, G173, D195, and N234.

The protein belongs to the methyltransferase superfamily. PrmA family.

It localises to the cytoplasm. It catalyses the reaction L-lysyl-[protein] + 3 S-adenosyl-L-methionine = N(6),N(6),N(6)-trimethyl-L-lysyl-[protein] + 3 S-adenosyl-L-homocysteine + 3 H(+). In terms of biological role, methylates ribosomal protein L11. This is Ribosomal protein L11 methyltransferase from Burkholderia ambifaria (strain MC40-6).